The following is a 274-amino-acid chain: MEAPPPPPPLPATTLAPGRSRKLLLLPLLLFLLRAEAVRGFEAEERPRTREEECHFYAGGQVYPGEVSRVSVAEHSLHLSKAKISKPAPYWEGTAVINGEFKELKLTDYRGKYLVFFFYPLDFTFVCPTEIIAFGDRIDEFRSINTEVVACSVDSQFTHLAWINTPRRQGGLGSINIPLLADLNHQISKDYGVYLEDSGHTLRGLFIIDDKGILRQITLNDLPVGRSVDETLRLVQAFQYTDKHGEVCPAGWKPGSETIIPDPAGKLKYFDKLN.

Positions 1–40 are cleaved as a signal peptide; sequence MEAPPPPPPLPATTLAPGRSRKLLLLPLLLFLLRAEAVRG. One can recognise a Thioredoxin domain in the interval 82-240; the sequence is AKISKPAPYW…TLRLVQAFQY (159 aa). Residue Cys127 is the Cysteine sulfenic acid (-SOH) intermediate of the active site.

This sequence belongs to the peroxiredoxin family. AhpC/Prx1 subfamily. As to quaternary structure, homodimer; disulfide-linked, upon oxidation. 5 homodimers assemble to form a ring-like decamer. Post-translationally, the enzyme can be inactivated by further oxidation of the cysteine sulfenic acid (C(P)-SOH) to sulphinic acid (C(P)-SO2H) and sulphonic acid (C(P)-SO3H) instead of its condensation to a disulfide bond.

The protein localises to the cytoplasm. Its subcellular location is the endoplasmic reticulum. The catalysed reaction is a hydroperoxide + [thioredoxin]-dithiol = an alcohol + [thioredoxin]-disulfide + H2O. In terms of biological role, thiol-specific peroxidase that catalyzes the reduction of hydrogen peroxide and organic hydroperoxides to water and alcohols, respectively. Plays a role in cell protection against oxidative stress by detoxifying peroxides and as sensor of hydrogen peroxide-mediated signaling events. Regulates the activation of NF-kappa-B in the cytosol by a modulation of I-kappa-B-alpha phosphorylation. The protein is Peroxiredoxin-4 (PRDX4) of Bos taurus (Bovine).